The following is a 691-amino-acid chain: Protein simr-1 (691 aa).

Positions 139–204 (EAEITPGTIY…TLFHLGKFTI (66 aa)) constitute a Tudor; degenerate domain. Disordered stretches follow at residues 547 to 573 (TGPCGSNTSRPTAQNTANSSINQDMSI) and 588 to 618 (DNLNDTENWPNSEREQSATEMESGAEATTNS). 2 stretches are compositionally biased toward polar residues: residues 549–573 (PCGSNTSRPTAQNTANSSINQDMSI) and 588–598 (DNLNDTENWPN).

Its subcellular location is the cytoplasm. The protein resides in the perinuclear region. Acts downstream of piRNA production to promote mediator complex-dependent endogenous siRNA biogenesis from piRNA-target mRNAs in the RNA interference pathway in germ cells. Not required to identify target mRNA by the piRNA pathway. Plays a role in both spermatogenesis and oogenesis and in maintaining fertility over multiple generations, probably by directing mutator-dependent silencing to piRNA-targeted genes. The protein is Protein simr-1 of Caenorhabditis elegans.